Reading from the N-terminus, the 106-residue chain is ATP-dependent Clp protease adapter protein ClpS (106 aa).

Belongs to the ClpS family. Binds to the N-terminal domain of the chaperone ClpA.

Functionally, involved in the modulation of the specificity of the ClpAP-mediated ATP-dependent protein degradation. This chain is ATP-dependent Clp protease adapter protein ClpS, found in Escherichia coli O139:H28 (strain E24377A / ETEC).